We begin with the raw amino-acid sequence, 142 residues long: MKTFSAKPKEVRRDWYLVDANGVTLGRLASEIARRLRGKHKAIYTPHIDTGDYIVVVNAEKIRATGKKMAQKHYYRHSGYPGGIKSLTLEKLLERAPERAIELAVKGMLPKNPLGRAMFRKLNVYGGSNHPHIAQQPQPLKI.

The protein belongs to the universal ribosomal protein uL13 family. As to quaternary structure, part of the 50S ribosomal subunit.

Functionally, this protein is one of the early assembly proteins of the 50S ribosomal subunit, although it is not seen to bind rRNA by itself. It is important during the early stages of 50S assembly. In Nitrosococcus oceani (strain ATCC 19707 / BCRC 17464 / JCM 30415 / NCIMB 11848 / C-107), this protein is Large ribosomal subunit protein uL13.